A 135-amino-acid chain; its full sequence is Salivary protein 15 (135 aa).

A signal peptide spans 1–21 (MESFVAMKVVCILFLVGVVAA). N-linked (GlcNAc...) asparagine glycosylation is present at Asn22. The segment at 48–67 (PNYISNHQKLALKLLKICKD) is required for Borrelia OspC-binding. Asn92 and Asn104 each carry an N-linked (GlcNAc...) asparagine glycan. The segment at 116–135 (GPNGQTCAEKNKCVGHIPGC) is CD4-binding.

Belongs to the salp15 family. As to quaternary structure, monomer. Interacts with host CD4. Interacts with host DC-SIGN (CD209). (Microbial infection) Interacts with Borrelia outer surface protein C (OspC). In terms of processing, glycosylated. Expressed in salivary glands. Detected in host skin, at the site of natural inoculation.

It localises to the secreted. Its function is as follows. Salivary tick protein that downregulates host immune system by binding to both dendritic cells, and CD4(+) T cells. Specifically binds to the CD4 coreceptor on T cells. This interaction prevents the activation of the Src kinase, Lck, and its downstream substrate Zap-70, and results in deficient activation of PLCgamma1, the repression of calcium fluxes triggered by T-cell antigen receptor (TCR) ligation, and a subsequent reduction in interleukin-2 production. This salivary protein also binds to DC-SIGN (CD209) on dendritic cells (DC) and activates the Raf-1 kinase/MEK signaling pathway that results in down-regulating expression of pro-inflammatory cytokines. Furthermore, it inhibits T cell proliferation induced by DCs. It also inhibits in vitro keratinocyte inflammation induced by Borrelia burgdorferi or by the major outer surface protein (OspC) of Borrelia. In addition, it downregulates chemokines and monocyte chemoattractant protein 1, as well as several antimicrobial peptides such as defensins, cathelicidin, psoriasin, and RNase 7. Apart from its immunomodulatory activities, it is also associated with protection of Borrelia spirochetes from antibody-mediated killing through its binding to OspC. In vivo, tests on different immune disease animal models show promising therapeutic results, e.g., in inhibiting HIV infection, experimental autoimmune encephalomyelitis, transplantation rejection, and asthma. (Microbial infection) Protects Borrelia garinii (strains A87S and VSBP) from host complement-mediated killing. In terms of biological role, (Microbial infection) Partially protects Borrelia burgdorferi (strains VS215 and B31) from host complement-mediated killing. In Ixodes scapularis (Black-legged tick), this protein is Salivary protein 15.